The sequence spans 189 residues: dTTP/UTP pyrophosphatase (189 aa).

The active-site Proton acceptor is Asp-64.

It belongs to the Maf family. YhdE subfamily. A divalent metal cation serves as cofactor.

The protein localises to the cytoplasm. The enzyme catalyses dTTP + H2O = dTMP + diphosphate + H(+). It carries out the reaction UTP + H2O = UMP + diphosphate + H(+). Functionally, nucleoside triphosphate pyrophosphatase that hydrolyzes dTTP and UTP. May have a dual role in cell division arrest and in preventing the incorporation of modified nucleotides into cellular nucleic acids. The polypeptide is dTTP/UTP pyrophosphatase (Syntrophomonas wolfei subsp. wolfei (strain DSM 2245B / Goettingen)).